A 407-amino-acid chain; its full sequence is Proteasome-activating nucleotidase (407 aa).

Positions 22–67 form a coiled coil; it reads KEKTQIAELESKVLRLELKNKDVTRENVQIKKENEILKRELDKLRI. ATP contacts are provided by residues 192–197 and His331; that span reads GTGKTL. Positions 405–407 are docks into pockets in the proteasome alpha-ring to cause gate opening; the sequence is MYG.

Belongs to the AAA ATPase family. Homohexamer. The hexameric complex has a two-ring architecture resembling a top hat that caps the 20S proteasome core at one or both ends. Upon ATP-binding, the C-terminus of PAN interacts with the alpha-rings of the proteasome core by binding to the intersubunit pockets.

The protein resides in the cytoplasm. In terms of biological role, ATPase which is responsible for recognizing, binding, unfolding and translocation of substrate proteins into the archaeal 20S proteasome core particle. Is essential for opening the gate of the 20S proteasome via an interaction with its C-terminus, thereby allowing substrate entry and access to the site of proteolysis. Thus, the C-termini of the proteasomal ATPase function like a 'key in a lock' to induce gate opening and therefore regulate proteolysis. Unfolding activity requires energy from ATP hydrolysis, whereas ATP binding alone promotes ATPase-20S proteasome association which triggers gate opening, and supports translocation of unfolded substrates. This chain is Proteasome-activating nucleotidase, found in Methanococcus maripaludis (strain C7 / ATCC BAA-1331).